Reading from the N-terminus, the 198-residue chain is Imidazole glycerol phosphate synthase subunit HisH (198 aa).

The region spanning 1–194 (MIAIIDYGLG…LKGGFQDDQT (194 aa)) is the Glutamine amidotransferase type-1 domain. Residue C77 is the Nucleophile of the active site. Catalysis depends on residues H169 and E171.

In terms of assembly, heterodimer of HisH and HisF.

It localises to the cytoplasm. It catalyses the reaction 5-[(5-phospho-1-deoxy-D-ribulos-1-ylimino)methylamino]-1-(5-phospho-beta-D-ribosyl)imidazole-4-carboxamide + L-glutamine = D-erythro-1-(imidazol-4-yl)glycerol 3-phosphate + 5-amino-1-(5-phospho-beta-D-ribosyl)imidazole-4-carboxamide + L-glutamate + H(+). It carries out the reaction L-glutamine + H2O = L-glutamate + NH4(+). The protein operates within amino-acid biosynthesis; L-histidine biosynthesis; L-histidine from 5-phospho-alpha-D-ribose 1-diphosphate: step 5/9. Its function is as follows. IGPS catalyzes the conversion of PRFAR and glutamine to IGP, AICAR and glutamate. The HisH subunit catalyzes the hydrolysis of glutamine to glutamate and ammonia as part of the synthesis of IGP and AICAR. The resulting ammonia molecule is channeled to the active site of HisF. This chain is Imidazole glycerol phosphate synthase subunit HisH, found in Staphylococcus saprophyticus subsp. saprophyticus (strain ATCC 15305 / DSM 20229 / NCIMB 8711 / NCTC 7292 / S-41).